Reading from the N-terminus, the 456-residue chain is MASFPPSLVFTVRRKEPILVLPSKPTPRELKQLSDIDDQEGLRFQVPVIMFYKRKLSTEGEDPVKVIREALAEALAFYYPFAGRLIEGPNRKLMVDCTSEGVLFIEADADIELNQLIGDTIDPGTYLDELLHDVPGSEGILGCPLLLIQVTRFRCGGWAFAIRLNHTMSDTLGLVQFLTTIAEFTRGAEGAPSVPPVWQREFLAARQPPFIPFQHHEYEQVIDTTPDDNKKSMTHKSFFFGPKEIRAIRSHLPLHHRSTSSTFDVLTACLWRCRTCALVLDPKKTVRISCAASGRGKHDLHVPRGYYGNVSAFPATVLRAGMISTSPLEYAMEGVKKAKARMTGEYLRSVADLMVTKGRPLYTVVGNYIVSDMTRVGLDTIDFGWGKPVYGGPARAFPLISFYGRFKDNKGEDGIVVLICLPEAAMKRFQEELKKMTGEHVDGPFDYKPIKVVSKL.

Residues His166 and Asp382 each act as proton acceptor in the active site.

This sequence belongs to the plant acyltransferase family. In terms of tissue distribution, expressed in fruit.

The enzyme catalyses 3-(methylsulfanyl)propanoyl-CoA + butan-1-ol = butyl 3-(methylsulfanyl)propanoate + CoA. It carries out the reaction ethanol + benzoyl-CoA = ethyl benzoate + CoA. It catalyses the reaction butan-1-ol + benzoyl-CoA = butyl benzoate + CoA. The catalysed reaction is 2-(methylsulfanyl)acetyl-CoA + butan-1-ol = butyl 2-(methylsulfanyl)acetate + CoA. In terms of biological role, involved in the biosynthesis of volatile esters which confer kiwifruit flavor. Alcohol acyl transferase that can use a wide range of alcohols as substrate to produce esters. Exhibits benzoyl-CoA:alcohol O-acyltransferase activity. The chain is Alcohol acyltransferase 1 from Actinidia deliciosa (Kiwi).